The primary structure comprises 450 residues: 3',5'-cyclic-AMP phosphodiesterase 7B (450 aa).

A PDEase domain is found at 97–420; the sequence is LDEDYLGQAR…AQWKSLLPRQ (324 aa). His-173 functions as the Proton donor in the catalytic mechanism. Residues His-177, His-213, Asp-214, and Asp-323 each contribute to the a divalent metal cation site. A disordered region spans residues 418-450; sequence PRQHRSRGSSGSGPDHDHAGQGTESEEQEGDSP. Residue Ser-426 is modified to Phosphoserine. The segment covering 441-450 has biased composition (acidic residues); the sequence is ESEEQEGDSP.

It belongs to the cyclic nucleotide phosphodiesterase family. PDE7 subfamily. A divalent metal cation is required as a cofactor. In terms of tissue distribution, highly expressed in brain. Also expressed in heart, liver, skeletal muscle and pancreas.

The enzyme catalyses 3',5'-cyclic AMP + H2O = AMP + H(+). The protein operates within purine metabolism; 3',5'-cyclic AMP degradation; AMP from 3',5'-cyclic AMP: step 1/1. Its activity is regulated as follows. Inhibited by dipyridamole, IBMX and SCH 51866. Insensitive to zaprinast, rolipram, and milrinone. Hydrolyzes the second messenger cAMP, which is a key regulator of many important physiological processes. May be involved in the control of cAMP-mediated neural activity and cAMP metabolism in the brain. The sequence is that of 3',5'-cyclic-AMP phosphodiesterase 7B from Homo sapiens (Human).